The sequence spans 599 residues: Pentatricopeptide repeat-containing protein At3g62470, mitochondrial (599 aa).

The N-terminal 99 residues, 1-99 (MAAAPWLHLS…RGFSSGSSNV (99 aa)), are a transit peptide targeting the mitochondrion. PPR repeat units lie at residues 194–228 (DSRT…GLLT), 230–262 (ETFT…KFKI), 263–293 (GVET…LKER), 297–331 (NMMT…GLKP), 332–366 (DIVA…GPCP), 367–401 (NVRS…GLQP), 402–436 (DAAV…GHPP), 437–471 (DGKT…EIEP), 472–506 (SIHT…GICP), and 507–541 (DDNS…GMKT).

The protein belongs to the PPR family. P subfamily.

Its subcellular location is the mitochondrion. This is Pentatricopeptide repeat-containing protein At3g62470, mitochondrial from Arabidopsis thaliana (Mouse-ear cress).